We begin with the raw amino-acid sequence, 58 residues long: Small ribosomal subunit protein uS14 (58 aa).

The interval 1–21 is disordered; sequence MSESETEQTGEHASHRTGQTH. Residues 9–21 show a composition bias toward basic and acidic residues; it reads TGEHASHRTGQTH. Residues Cys23, Cys26, Cys41, and Cys44 each contribute to the Zn(2+) site.

Belongs to the universal ribosomal protein uS14 family. Zinc-binding uS14 subfamily. In terms of assembly, part of the 30S ribosomal subunit. It depends on Zn(2+) as a cofactor.

Its function is as follows. Binds 16S rRNA, required for the assembly of 30S particles. The sequence is that of Small ribosomal subunit protein uS14 from Haloquadratum walsbyi (strain DSM 16790 / HBSQ001).